The chain runs to 291 residues: tRNA-uridine aminocarboxypropyltransferase 1 (291 aa).

The segment at 158–181 (KNSAYEPSSKRPKFSPENDKNTYE) is disordered. Over residues 171–181 (FSPENDKNTYE) the composition is skewed to basic and acidic residues. The DXTW motif lies at 199–202 (DSTW).

The protein belongs to the TDD superfamily. DTWD1 family.

Its subcellular location is the nucleus. It carries out the reaction a uridine in tRNA + S-adenosyl-L-methionine = a 3-[(3S)-3-amino-3-carboxypropyl]uridine in tRNA + S-methyl-5'-thioadenosine + H(+). Functionally, catalyzes the formation of 3-(3-amino-3-carboxypropyl)uridine (acp3U) at position 20 in the D-loop of several cytoplasmic tRNAs (acp3U(20)). The sequence is that of tRNA-uridine aminocarboxypropyltransferase 1 from Xenopus laevis (African clawed frog).